A 327-amino-acid polypeptide reads, in one-letter code: Beta-ketoacyl-[acyl-carrier-protein] synthase III 2 (327 aa).

Active-site residues include Cys-114 and His-251. The ACP-binding stretch occupies residues Ser-252–Arg-256. Asn-281 is a catalytic residue.

It belongs to the thiolase-like superfamily. FabH family. As to quaternary structure, homodimer.

Its subcellular location is the cytoplasm. The catalysed reaction is malonyl-[ACP] + acetyl-CoA + H(+) = 3-oxobutanoyl-[ACP] + CO2 + CoA. The protein operates within lipid metabolism; fatty acid biosynthesis. Functionally, catalyzes the condensation reaction of fatty acid synthesis by the addition to an acyl acceptor of two carbons from malonyl-ACP. Catalyzes the first condensation reaction which initiates fatty acid synthesis and may therefore play a role in governing the total rate of fatty acid production. Possesses both acetoacetyl-ACP synthase and acetyl transacylase activities. Its substrate specificity determines the biosynthesis of branched-chain and/or straight-chain of fatty acids. The polypeptide is Beta-ketoacyl-[acyl-carrier-protein] synthase III 2 (Bacillus anthracis).